The primary structure comprises 387 residues: Putative F-box protein At1g47800 (387 aa).

Residues 8-54 enclose the F-box domain; sequence LQSLDHIPIDVLFEILVKLPAKSVARFLCVSKVWATMIRGEVFIRSF.

In Arabidopsis thaliana (Mouse-ear cress), this protein is Putative F-box protein At1g47800.